We begin with the raw amino-acid sequence, 406 residues long: B3 domain-containing protein Os11g0197600 (406 aa).

The disordered stretch occupies residues 1–20 (MVVREKQGGRMGKGKGKGKE). The TF-B3 1 DNA-binding region spans 30–123 (RSFFRVLLTL…QFSVTVFEPS (94 aa)). Residues 199–245 (ESSRRKRAGASAGKSKVTSTSHNSTRGSSCSSDEDNSSSKSPNPPFL) form a disordered region. Positions 214–225 (KVTSTSHNSTRG) are enriched in polar residues. Positions 298–393 (AVQIMMESYV…NIKVHIYRVV (96 aa)) form a DNA-binding region, TF-B3 2.

It is found in the nucleus. This chain is B3 domain-containing protein Os11g0197600, found in Oryza sativa subsp. japonica (Rice).